A 605-amino-acid polypeptide reads, in one-letter code: DNA primase (605 aa).

The segment at 38-62 adopts a CHC2-type zinc-finger fold; it reads CPFHDEKTPSFTVSEDKQICHCFGC. The Toprim domain maps to 260 to 341; that stretch reads DEIVLLEGFM…NVFVIQLPSG (82 aa). Mg(2+)-binding residues include Glu-266, Asp-310, and Asp-312.

Belongs to the DnaG primase family. As to quaternary structure, monomer. Interacts with DnaB. The cofactor is Zn(2+). Requires Mg(2+) as cofactor.

The catalysed reaction is ssDNA + n NTP = ssDNA/pppN(pN)n-1 hybrid + (n-1) diphosphate.. Functionally, RNA polymerase that catalyzes the synthesis of short RNA molecules used as primers for DNA polymerase during DNA replication. This Staphylococcus aureus (strain MW2) protein is DNA primase.